The primary structure comprises 69 residues: Neurotoxin Cex3 (69 aa).

Ala1 is a signal peptide. The LCN-type CS-alpha/beta domain maps to 2-67 (KDGYLVNKST…TYPLPNKSCG (66 aa)). 4 disulfides stabilise this stretch: Cys13–Cys66, Cys17–Cys42, Cys26–Cys47, and Cys30–Cys49. Cys66 carries the cysteine amide modification. Positions 67–69 (GRK) are excised as a propeptide.

This sequence belongs to the long (4 C-C) scorpion toxin superfamily. Sodium channel inhibitor family. Beta subfamily. As to expression, expressed by the venom gland.

Its subcellular location is the secreted. Its function is as follows. Beta toxins bind voltage-independently at site-4 of sodium channels (Nav) and shift the voltage of activation toward more negative potentials thereby affecting sodium channel activation and promoting spontaneous and repetitive firing. In Centruroides exilicauda (Bark scorpion), this protein is Neurotoxin Cex3.